A 391-amino-acid chain; its full sequence is Alkanesulfonate monooxygenase (391 aa).

The protein belongs to the SsuD family.

The catalysed reaction is an alkanesulfonate + FMNH2 + O2 = an aldehyde + FMN + sulfite + H2O + 2 H(+). In terms of biological role, catalyzes the desulfonation of aliphatic sulfonates. The sequence is that of Alkanesulfonate monooxygenase from Rhodopseudomonas palustris (strain TIE-1).